We begin with the raw amino-acid sequence, 131 residues long: Small ribosomal subunit protein uS8 (131 aa).

The protein belongs to the universal ribosomal protein uS8 family. Part of the 30S ribosomal subunit. Contacts proteins S5 and S12.

In terms of biological role, one of the primary rRNA binding proteins, it binds directly to 16S rRNA central domain where it helps coordinate assembly of the platform of the 30S subunit. In Novosphingobium aromaticivorans (strain ATCC 700278 / DSM 12444 / CCUG 56034 / CIP 105152 / NBRC 16084 / F199), this protein is Small ribosomal subunit protein uS8.